A 324-amino-acid polypeptide reads, in one-letter code: Carbamate kinase (324 aa).

It belongs to the carbamate kinase family.

The protein resides in the cytoplasm. The enzyme catalyses hydrogencarbonate + NH4(+) + ATP = carbamoyl phosphate + ADP + H2O + H(+). Its pathway is amino-acid degradation; L-arginine degradation via ADI pathway. This chain is Carbamate kinase, found in Rhizobium meliloti (strain 1021) (Ensifer meliloti).